Reading from the N-terminus, the 274-residue chain is Large ribosomal subunit protein uL2 (274 aa).

The tract at residues 224–256 (VMNPVDHPHGGGEGKTGEGRHPVDPWGNLTKGY) is disordered. The segment covering 229–246 (DHPHGGGEGKTGEGRHPV) has biased composition (basic and acidic residues).

This sequence belongs to the universal ribosomal protein uL2 family. Part of the 50S ribosomal subunit. Forms a bridge to the 30S subunit in the 70S ribosome.

Functionally, one of the primary rRNA binding proteins. Required for association of the 30S and 50S subunits to form the 70S ribosome, for tRNA binding and peptide bond formation. It has been suggested to have peptidyltransferase activity; this is somewhat controversial. Makes several contacts with the 16S rRNA in the 70S ribosome. The chain is Large ribosomal subunit protein uL2 from Polaromonas naphthalenivorans (strain CJ2).